The sequence spans 386 residues: Patatin-B1 (386 aa).

An N-terminal signal peptide occupies residues 1 to 23 (MATTKSFLILFFMILATTSSTCA). One can recognise a PNPLA domain in the interval 32 to 229 (LSIDGGGIKG…TVGDPALLSL (198 aa)). The GXGXXG motif lies at 36-41 (GGGIKG). Positions 75 to 79 (GTSTG) match the GXSXG motif. Ser77 serves as the catalytic Nucleophile. Asn115 is a glycosylation site (N-linked (GlcNAc...) asparagine). Asp215 (proton acceptor) is an active-site residue. Positions 215–217 (DGG) match the DGA/G motif.

The protein belongs to the patatin family.

The protein resides in the vacuole. In terms of biological role, probable lipolytic acyl hydrolase (LAH), an activity which is thought to be involved in the response of tubers to pathogens. This chain is Patatin-B1 (PATB1), found in Solanum tuberosum (Potato).